The sequence spans 244 residues: Small ribosomal subunit protein uS2 (244 aa).

The protein belongs to the universal ribosomal protein uS2 family.

In Hydrogenovibrio crunogenus (strain DSM 25203 / XCL-2) (Thiomicrospira crunogena), this protein is Small ribosomal subunit protein uS2.